The chain runs to 124 residues: Small ribosomal subunit protein uS12 (124 aa).

Asp-89 bears the 3-methylthioaspartic acid mark. A disordered region spans residues 105–124 (AGVKDRRQSRSKYGAKRPKA). A compositionally biased stretch (basic residues) spans 113-124 (SRSKYGAKRPKA).

This sequence belongs to the universal ribosomal protein uS12 family. In terms of assembly, part of the 30S ribosomal subunit. Contacts proteins S8 and S17. May interact with IF1 in the 30S initiation complex.

With S4 and S5 plays an important role in translational accuracy. Functionally, interacts with and stabilizes bases of the 16S rRNA that are involved in tRNA selection in the A site and with the mRNA backbone. Located at the interface of the 30S and 50S subunits, it traverses the body of the 30S subunit contacting proteins on the other side and probably holding the rRNA structure together. The combined cluster of proteins S8, S12 and S17 appears to hold together the shoulder and platform of the 30S subunit. The polypeptide is Small ribosomal subunit protein uS12 (rpsL) (Synechococcus elongatus (strain ATCC 33912 / PCC 7942 / FACHB-805) (Anacystis nidulans R2)).